The primary structure comprises 251 residues: Cytochrome c oxidase subunit 2 (251 aa).

The first 15 residues, 1–15 (MLTFLSNLNNMIIMN), serve as a signal peptide directing secretion. At 16–42 (DVPTPYGVYFQDSATPNQEGILELHDN) the chain is on the mitochondrial intermembrane side. The helical transmembrane segment at 43–64 (IMFYLLVILGLVSWLLFTITRT) threads the bilayer. Topologically, residues 65-82 (YSKNPIAYKYIKHGQTIE) are mitochondrial matrix. Residues 83 to 107 (IIWTIFPAVVLLIIAFPSFILLYLC) traverse the membrane as a helical segment. The Mitochondrial intermembrane portion of the chain corresponds to 108–251 (DEVISPAMTI…PSFLEWLNEQ (144 aa)). The Cu cation site is built by His186, Cys221, Glu223, Cys225, His229, and Met232. Mg(2+) is bound at residue Glu223.

This sequence belongs to the cytochrome c oxidase subunit 2 family. Component of the cytochrome c oxidase (complex IV, CIV), a multisubunit enzyme composed of a catalytic core of 3 subunits and several supernumerary subunits. The complex exists as a monomer or a dimer and forms supercomplexes (SCs) in the inner mitochondrial membrane with ubiquinol-cytochrome c oxidoreductase (cytochrome b-c1 complex, complex III, CIII). Cu cation is required as a cofactor. Post-translationally, the signal sequence of COX2 is processed by IMP1.

It is found in the mitochondrion inner membrane. The enzyme catalyses 4 Fe(II)-[cytochrome c] + O2 + 8 H(+)(in) = 4 Fe(III)-[cytochrome c] + 2 H2O + 4 H(+)(out). Functionally, component of the cytochrome c oxidase, the last enzyme in the mitochondrial electron transport chain which drives oxidative phosphorylation. The respiratory chain contains 3 multisubunit complexes succinate dehydrogenase (complex II, CII), ubiquinol-cytochrome c oxidoreductase (cytochrome b-c1 complex, complex III, CIII) and cytochrome c oxidase (complex IV, CIV), that cooperate to transfer electrons derived from NADH and succinate to molecular oxygen, creating an electrochemical gradient over the inner membrane that drives transmembrane transport and the ATP synthase. Cytochrome c oxidase is the component of the respiratory chain that catalyzes the reduction of oxygen to water. Electrons originating from reduced cytochrome c in the intermembrane space (IMS) are transferred via the dinuclear copper A center (CU(A)) of subunit 2 and heme A of subunit 1 to the active site in subunit 1, a binuclear center (BNC) formed by heme A3 and copper B (CU(B)). The BNC reduces molecular oxygen to 2 water molecules using 4 electrons from cytochrome c in the IMS and 4 protons from the mitochondrial matrix. The chain is Cytochrome c oxidase subunit 2 (COX2) from Lachancea kluyveri (strain ATCC 58438 / CBS 3082 / BCRC 21498 / NBRC 1685 / JCM 7257 / NCYC 543 / NRRL Y-12651) (Yeast).